The chain runs to 704 residues: Ribosomal RNA large subunit methyltransferase K/L (704 aa).

Residues 43–154 form the THUMP domain; that stretch reads TMYQSLLWSR…KEKASLSLDL (112 aa).

This sequence belongs to the methyltransferase superfamily. RlmKL family.

The protein resides in the cytoplasm. It catalyses the reaction guanosine(2445) in 23S rRNA + S-adenosyl-L-methionine = N(2)-methylguanosine(2445) in 23S rRNA + S-adenosyl-L-homocysteine + H(+). The catalysed reaction is guanosine(2069) in 23S rRNA + S-adenosyl-L-methionine = N(2)-methylguanosine(2069) in 23S rRNA + S-adenosyl-L-homocysteine + H(+). In terms of biological role, specifically methylates the guanine in position 2445 (m2G2445) and the guanine in position 2069 (m7G2069) of 23S rRNA. The polypeptide is Ribosomal RNA large subunit methyltransferase K/L (Proteus mirabilis (strain HI4320)).